Reading from the N-terminus, the 84-residue chain is Putative regulatory protein Hore_09800 (84 aa).

Belongs to the RemA family.

This Halothermothrix orenii (strain H 168 / OCM 544 / DSM 9562) protein is Putative regulatory protein Hore_09800.